The following is a 530-amino-acid chain: Retinoic acid-induced protein 2 (530 aa).

The segment covering 1-13 has biased composition (polar residues); it reads MDDLQSQNLSMDM. A disordered region spans residues 1–22; that stretch reads MDDLQSQNLSMDMTDSPPALAN.

The chain is Retinoic acid-induced protein 2 (RAI2) from Homo sapiens (Human).